We begin with the raw amino-acid sequence, 262 residues long: Ubiquitin thioesterase otubain-like (262 aa).

One can recognise an OTU domain in the interval 64–262 (KFIRRTRPDG…PGHYDILYPN (199 aa)). Residue aspartate 72 is part of the active site. Cysteine 75 acts as the Nucleophile in catalysis. Residue isoleucine 168 participates in substrate binding. Residue histidine 255 is part of the active site.

It belongs to the peptidase C65 family.

The enzyme catalyses Thiol-dependent hydrolysis of ester, thioester, amide, peptide and isopeptide bonds formed by the C-terminal Gly of ubiquitin (a 76-residue protein attached to proteins as an intracellular targeting signal).. Its function is as follows. Possible hydrolase that can remove conjugated ubiquitin from proteins in vitro and may therefore play an important regulatory role at the level of protein turnover by preventing degradation. In Drosophila melanogaster (Fruit fly), this protein is Ubiquitin thioesterase otubain-like.